We begin with the raw amino-acid sequence, 702 residues long: Penicillin-binding protein activator LpoA (702 aa).

The N-terminal stretch at 1–26 (MVPSTFLRSKPARCLPVLLATLIFAG) is a signal peptide. Cys-27 carries the N-palmitoyl cysteine lipid modification. Residue Cys-27 is the site of S-diacylglycerol cysteine attachment. The interval 327–378 (GSRADPVQAPTQDQAAPAAEPAAQAPATSTTPQTTASPATQPVTAPAAQPQP) is disordered. Residues 330–378 (ADPVQAPTQDQAAPAAEPAAQAPATSTTPQTTASPATQPVTAPAAQPQP) are compositionally biased toward low complexity.

The protein belongs to the LpoA family. In terms of assembly, interacts with PBP1a.

The protein localises to the cell outer membrane. In terms of biological role, regulator of peptidoglycan synthesis that is essential for the function of penicillin-binding protein 1A (PBP1a). The chain is Penicillin-binding protein activator LpoA from Klebsiella pneumoniae subsp. pneumoniae (strain ATCC 700721 / MGH 78578).